Consider the following 192-residue polypeptide: Inosine triphosphate pyrophosphatase (192 aa).

T10–K15 lines the ITP pocket. Residue E46 participates in Mg(2+) binding. Residues K58, D74–T75, K91, F149–D152, K172, and H177–R178 each bind ITP.

This sequence belongs to the HAM1 NTPase family. In terms of assembly, homodimer. Mg(2+) is required as a cofactor. Mn(2+) serves as cofactor.

It localises to the cytoplasm. The protein resides in the nucleus. It carries out the reaction ITP + H2O = IMP + diphosphate + H(+). The enzyme catalyses dITP + H2O = dIMP + diphosphate + H(+). It catalyses the reaction XTP + H2O = XMP + diphosphate + H(+). In terms of biological role, pyrophosphatase that hydrolyzes non-canonical purine nucleotides such as inosine triphosphate (ITP), deoxyinosine triphosphate (dITP) or xanthosine 5'-triphosphate (XTP) to their respective monophosphate derivatives. The enzyme does not distinguish between the deoxy- and ribose forms. Probably excludes non-canonical purines from RNA and DNA precursor pools, thus preventing their incorporation into RNA and DNA and avoiding chromosomal lesions. The chain is Inosine triphosphate pyrophosphatase from Puccinia graminis f. sp. tritici (strain CRL 75-36-700-3 / race SCCL) (Black stem rust fungus).